The sequence spans 515 residues: Ribonuclease Y (515 aa).

The helical transmembrane segment at 6–26 (LTSFVIITLSLAVGLTGGYYG) threads the bilayer. Residues 205 to 290 (TVSVVPLPND…EMVEKARKEI (86 aa)) enclose the KH domain. The HD domain occupies 331–424 (VLRHSVEVAH…VQAADAISAS (94 aa)).

This sequence belongs to the RNase Y family.

It is found in the cell membrane. Functionally, endoribonuclease that initiates mRNA decay. The sequence is that of Ribonuclease Y from Syntrophomonas wolfei subsp. wolfei (strain DSM 2245B / Goettingen).